The sequence spans 193 residues: uncharacterized protein (193 aa).

Disordered regions lie at residues 1–21 (MPKG…APPL), 53–96 (GAPA…PWPS), and 114–136 (SGPE…ASAS). Over residues 53–70 (GAPAGGAPAAGGRSLPQG) the composition is skewed to low complexity. Residues 71 to 95 (PSAPAPPPPPGLGPPSERPCPPPWP) show a composition bias toward pro residues. The span at 116–127 (PEAAASPLAPGP) shows a compositional bias: low complexity.

This is an uncharacterized protein from Bos taurus (Bovine).